Here is a 99-residue protein sequence, read N- to C-terminus: Bacterial microcompartment shell vertex protein EutN (99 aa).

One can recognise a BMV domain in the interval 5-87 (MKLAVVTGQI…VDLCVIGIVD (83 aa)).

The protein belongs to the CcmL/EutN family. As to quaternary structure, homopentamer with a small central pore.

It localises to the bacterial microcompartment. It participates in amine and polyamine degradation; ethanolamine degradation. In terms of biological role, probably forms vertices in the bacterial microcompartment (BMC) shell dedicated to ethanolamine degradation. Expression of eutK, eutL, eutM, eutN, eutS (eutSMNLK) in E.coli leads to formation of a single BMC. Coexpression of eutQ with eutSMNLK permits E.coli to make cells with more than one mobile BMC, as is usual in vivo. It may be involved in transporting positively charged molecules into and out of the BMC. Functionally, the ethanolamine (EA) catabolic bacterial microcompartment (BMC) probably concentrates low levels of ethanolamine catabolic enzymes, concentrates volatile reaction intermediates, keeps the level of toxic acetaldehyde low, generates enough acetyl-CoA to support cell growth, and maintains a pool of free coenzyme A (CoA) and NAD. Its function is as follows. Expression of the eut operon allows this bacteria to use ethanolamine (EA) as a carbon, nitrogen and energy source. It relies on cobalamin (vitamin B12) both as a cofactor for the ethanolamine ammonia-lyase (EAL) activity and to induce the operon. EA enhances bacterial survival in macrophages in a concentration-dependent manner, suggesting it is an important nutrient during infection. The sequence is that of Bacterial microcompartment shell vertex protein EutN from Salmonella typhimurium (strain LT2 / SGSC1412 / ATCC 700720).